The chain runs to 264 residues: MTSLDITTLVISILSLIATLSISFNIYFIELRKQRERKIERLQQEAKQFIINNLDEKDFIVLCQFIYKLYKHDKHTRKIHYEFVLLNEPVQKEVFKQLEILNIVDFKDNEWIANKFSILKEIVNDYQLGNWDDYKFYENFNFAYTLFREEKCDAVFEEIKQNKFGGKNLSFHEYLNEYAHRSKESDMLAPIDYFIDQNNLNNVFDRQKHAIYKLYLLDLILNELCRSMNNDHRINNEFKYFDCEVIYVEDLYLKILYKLYFQLN.

The chain crosses the membrane as a helical span at residues 9–29; it reads LVISILSLIATLSISFNIYFI.

It localises to the membrane. This is an uncharacterized protein from Ureaplasma parvum serovar 3 (strain ATCC 700970).